An 83-amino-acid polypeptide reads, in one-letter code: Delta-conotoxin-like Ac6.2 (83 aa).

An N-terminal signal peptide occupies residues 1–22 (MKLTCVVIVAVLFLTAWTFVTA). The propeptide occupies 23-51 (DDSRYGLKNLFPKARHEMKNPEASKLNKR). Cystine bridges form between C54–C69, C61–C73, and C68–C78. Residues P57 and P65 each carry the 4-hydroxyproline modification.

The protein belongs to the conotoxin O1 superfamily. Expressed by the venom duct.

It localises to the secreted. Delta-conotoxins bind to site 6 of voltage-gated sodium channels (Nav) and inhibit the inactivation process. This chain is Delta-conotoxin-like Ac6.2, found in Conus achatinus (Little frog cone).